Reading from the N-terminus, the 267-residue chain is Integral membrane protein 2C (267 aa).

At T37 the chain carries Phosphothreonine. The chain crosses the membrane as a helical; Signal-anchor for type II membrane protein span at residues 55–75 (VGGVCYLSMGMVVLLMGLVFA). Residues 136-230 (FGGGDPADII…LCNGKDTYRL (95 aa)) enclose the BRICHOS domain. Cysteines 163 and 222 form a disulfide. N169 carries an N-linked (GlcNAc...) asparagine glycan.

It belongs to the ITM2 family. In terms of assembly, interacts with BACE1. Interacts with APP. Interacts with STMN2. Type I membrane-bound, as well as soluble, furin has a pre-eminent role in ITM2C proteolytic processing. PCSK7 and PCSK5 may also be involved although to a lesser extent. The soluble form of PCSK7 is incapable of processing ITM2C. Fails to undergo shedding by ADAM10 and intramembrane cleavage by SPPL2B.

Its subcellular location is the lysosome membrane. The protein localises to the cell membrane. Functionally, negative regulator of amyloid-beta peptide production. May inhibit the processing of APP by blocking its access to alpha- and beta-secretase. Binding to the beta-secretase-cleaved APP C-terminal fragment is negligible, suggesting that ITM2C is a poor gamma-secretase cleavage inhibitor. May play a role in TNF-induced cell death and neuronal differentiation. This is Integral membrane protein 2C (ITM2C) from Macaca fascicularis (Crab-eating macaque).